A 360-amino-acid chain; its full sequence is Glycerol-1-phosphate dehydrogenase [NAD(P)+] (360 aa).

Residues 108–112 and 130–133 each bind NAD(+); these read GRVID and TAAS. Asp135 serves as a coordination point for substrate. Ser139 contacts NAD(+). Position 182 (Asp182) interacts with substrate. The Zn(2+) site is built by Asp182 and His262. His266 contacts substrate. Position 278 (His278) interacts with Zn(2+).

The protein belongs to the glycerol-1-phosphate dehydrogenase family. Zn(2+) is required as a cofactor.

It localises to the cytoplasm. It carries out the reaction sn-glycerol 1-phosphate + NAD(+) = dihydroxyacetone phosphate + NADH + H(+). The catalysed reaction is sn-glycerol 1-phosphate + NADP(+) = dihydroxyacetone phosphate + NADPH + H(+). It participates in membrane lipid metabolism; glycerophospholipid metabolism. Functionally, catalyzes the NAD(P)H-dependent reduction of dihydroxyacetonephosphate (DHAP or glycerone phosphate) to glycerol 1-phosphate (G1P). The G1P thus generated is used as the glycerophosphate backbone of phospholipids in the cellular membranes of Archaea. This Methanocorpusculum labreanum (strain ATCC 43576 / DSM 4855 / Z) protein is Glycerol-1-phosphate dehydrogenase [NAD(P)+].